The primary structure comprises 313 residues: Protein FixB (313 aa).

An FAD-binding site is contributed by 255-283 (LYLAVGISGQIQHMVGANASQTIFAINKD).

It belongs to the ETF alpha-subunit/FixB family. In terms of assembly, heterodimer of FixA and FixB.

It functions in the pathway amine and polyamine metabolism; carnitine metabolism. In terms of biological role, required for anaerobic carnitine reduction. May bring reductant to CaiA. This is Protein FixB from Escherichia coli (strain SMS-3-5 / SECEC).